The chain runs to 331 residues: 6-phosphogluconolactonase (331 aa).

The residue at position 287 (Lys287) is an N6-acetyllysine.

It belongs to the cycloisomerase 2 family.

It catalyses the reaction 6-phospho-D-glucono-1,5-lactone + H2O = 6-phospho-D-gluconate + H(+). It participates in carbohydrate degradation; pentose phosphate pathway; D-ribulose 5-phosphate from D-glucose 6-phosphate (oxidative stage): step 2/3. Functionally, catalyzes the hydrolysis of 6-phosphogluconolactone to 6-phosphogluconate. In Shigella boydii serotype 18 (strain CDC 3083-94 / BS512), this protein is 6-phosphogluconolactonase.